Consider the following 447-residue polypeptide: Phosphoglucosamine mutase (447 aa).

S104 serves as the catalytic Phosphoserine intermediate. The Mg(2+) site is built by S104, D243, D245, and D247. Position 104 is a phosphoserine (S104).

Belongs to the phosphohexose mutase family. Mg(2+) serves as cofactor. In terms of processing, activated by phosphorylation.

The enzyme catalyses alpha-D-glucosamine 1-phosphate = D-glucosamine 6-phosphate. Its function is as follows. Catalyzes the conversion of glucosamine-6-phosphate to glucosamine-1-phosphate. The sequence is that of Phosphoglucosamine mutase from Corynebacterium glutamicum (strain R).